The chain runs to 988 residues: Voltage-gated delayed rectifier potassium channel KCNH5 (988 aa).

The Cytoplasmic portion of the chain corresponds to 1 to 217 (MPGGKRGLVA…LHYCAFKTTW (217 aa)). In terms of domain architecture, PAS spans 14–86 (TFLENIVRRS…TIEKVRQTFD (73 aa)). Residues 91-143 (NCFEVLLYKKNRTPVWFYMQIAPIRNEHEKVVLFLCTFKDITLFKQPIEDDST) enclose the PAC domain. Residues 218–238 (DWVILILTFYTAIMVPYNVSF) traverse the membrane as a helical segment. At 239-243 (KTKQN) the chain is on the extracellular side. Residues 244–264 (NIAWLVLDSVVDVIFLVDIVL) form a helical membrane-spanning segment. Over 265-291 (NFHTTFVGPGGEVISDPKLIRMNYLKT) the chain is Cytoplasmic. A helical transmembrane segment spans residues 292 to 312 (WFVIDLLSCLPYDIINAFENV). Over 313–319 (DEGISSL) the chain is Extracellular. A helical; Voltage-sensor membrane pass occupies residues 320–340 (FSSLKVVRLLRLGRVARKLDH). Residues 341-346 (YLEYGA) are Cytoplasmic-facing. The chain crosses the membrane as a helical span at residues 347 to 367 (AVLVLLVCVFGLVAHWLACIW). Over 368 to 419 (YSIGDYEVIDEVTNTIQIDSWLYQLALSIGTPYRYNTSAGIWEGGPSKDSLY) the chain is Extracellular. An N-linked (GlcNAc...) asparagine glycan is attached at N403. Positions 420-440 (VSSLYFTMTSLTTIGFGNIAP) form an intramembrane region, pore-forming. A Selectivity filter motif is present at residues 432–437 (TIGFGN). Residues 441 to 446 (TTDVEK) are Extracellular-facing. Residues 447 to 467 (MFSVAMMMVGSLLYATIFGNV) form a helical membrane-spanning segment. Topologically, residues 468–988 (TTIFQQMYAN…PESDKDEINF (521 aa)) are cytoplasmic. Residue 550–667 (AFRLASDGCL…NSFSRNLTLT (118 aa)) participates in a nucleoside 3',5'-cyclic phosphate binding. The interval 704–715 (HPVRKLFQKFKQ) is calmodulin-binding. The segment at 718-742 (ELRNQGSAQSDPERSQLQVESRPLQ) is disordered. Residues 721-742 (NQGSAQSDPERSQLQVESRPLQ) show a composition bias toward polar residues. K785 participates in a covalent cross-link: Glycyl lysine isopeptide (Lys-Gly) (interchain with G-Cter in ubiquitin). 2 disordered regions span residues 839–897 (LLSE…AKHP) and 946–965 (SVPQ…PPQI). Residues 871-885 (SDLRLDKAGEARSPL) show a composition bias toward basic and acidic residues. S883 carries the phosphoserine modification. The interval 909–948 (TLQEVKHELKEDIQLLSCRMTALEKQVAEILKLLSEKSVP) is CAD (involved in subunit assembly).

It belongs to the potassium channel family. H (Eag) (TC 1.A.1.20) subfamily. Kv10.2/KCNH5 sub-subfamily. In terms of assembly, homotetramer. The potassium channel is probably composed of a homo- or heterotetrameric complex of pore-forming alpha subunits that can associate with modulating beta subunits. Heteromultimer with KCNH1/EAG. As to expression, detected in adult testis and in embryonic and adult brain, but not in other tissues. Highly expressed in specific brain areas, such as neocortex, olfactory bulb, primary olfactory cortex and brain stem. In cortex, expression is concentrated in a narrow band toward the middle lamella (layer IV). Moderately expressed in spinal cord, dorsal thalamic nuclei, medial hypothalamus, colliculus, lateral lemniscus, pontine nuclei and Islands of Calleja.

Its subcellular location is the membrane. It carries out the reaction K(+)(in) = K(+)(out). Its activity is regulated as follows. Inhibited by low nanomolar concentrations of cytosolic calcium. Its function is as follows. Pore-forming (alpha) subunit of a voltage-gated delayed rectifier potassium channel that mediates outward-rectifying potassium currents which, on depolarization, reaches a steady-state level and do not inactivate. The kinetic is characterized by a slow activation time course and a small voltage dependence of the activation time constants, therefore, starts to open at more negative voltages. The activation kinetics depend on the prepulse potential and external divalent cation concentration. The time course of activation is biphasic with a fast and a slowly activating current component. With negative prepulses, the current activation is delayed and slowed down several fold, whereas more positive prepulses speed up activation, therefore the activation rate depends on holding potential. The chain is Voltage-gated delayed rectifier potassium channel KCNH5 from Rattus norvegicus (Rat).